A 356-amino-acid polypeptide reads, in one-letter code: LRLSLYFPISISLSLSLEAMASFIATTTPAMPAFASVLDPKIPTKPEPKTETPKPKDDLERFRTSEVVLERKAKGFWRRKWNPRDIQNAVTLLVLHALAAMAPFYFSWDAFWISFILLGFASGVLGITLCFHRCLTHGGFKLPKLVEYFFAYCGSLALQGDPMEWVSNHRYHHQFVDTERDVHSPTQGFWFCHIGWVLDKDLFVEKRGGRRNNVNDLKKQAFYRFLQKTYMYHQLALIALLYYVGGFPYIVWGMGFRLVFMFHSTFAINSVCHKWGGRPWNTGDLSTNNMFVALCAFGEGWHNNHHAFEQSARHGLEWWEIDVTWYVIRTLQAIGLATNVKLPTEAQKQKLKAKSA.

Residues Leu-5–Ala-25 traverse the membrane as a helical segment. Positions Leu-38–Asp-58 are disordered. Residues Ile-42–Asp-58 are compositionally biased toward basic and acidic residues. A run of 2 helical transmembrane segments spans residues Asn-88–Trp-108 and Phe-111–Phe-131. The Histidine box-1 motif lies at His-132 to His-137. The Histidine box-2 motif lies at His-169–His-173. A helical membrane pass occupies residues Ala-236–Phe-256. A Histidine box-3 motif is present at residues His-302–His-306.

The protein belongs to the fatty acid desaturase type 1 family. Fe(2+) serves as cofactor.

The protein localises to the membrane. It carries out the reaction eicosanoyl-CoA + 2 Fe(II)-[cytochrome b5] + O2 + 2 H(+) = (5Z)-eicosenoyl-CoA + 2 Fe(III)-[cytochrome b5] + 2 H2O. It participates in lipid metabolism; monounsaturated fatty acid biosynthesis. In terms of biological role, desaturase involved in the biosynthesis of (5Z)-icos-5-enoate, an unusual monounsaturated fatty acid that makes up to 60% of the total fatty acids in Limnanthes sp. seed oil. Only acts on saturated fatty acids. The protein is Icosanoyl-CoA 5-desaturase of Limnanthes douglasii (Douglas' meadowfoam).